The chain runs to 264 residues: CD320 antigen (264 aa).

A signal peptide spans 1 to 28 (MARCGAGRAAALGLVLRLLLGLRTGPEA). Residues 50–87 (SCPTDTFKCLTSGYCVPLSWRCDGDRDCSDGSDEEECR) form the LDL-receptor class A 1 domain. 3 disulfides stabilise this stretch: cysteine 51–cysteine 64, cysteine 58–cysteine 77, and cysteine 71–cysteine 86. Ca(2+)-binding residues include tryptophan 69, aspartate 72, aspartate 74, aspartate 76, aspartate 82, and glutamate 83. A glycan (N-linked (GlcNAc...) asparagine) is linked at asparagine 122. An LDL-receptor class A 2 domain is found at 127–164 (PCQEGELRCILDDVCIPHTWRCDGHPDCPDSSDELSCD). 3 cysteine pairs are disulfide-bonded: cysteine 128-cysteine 141, cysteine 135-cysteine 154, and cysteine 148-cysteine 163. Residues tryptophan 146, aspartate 149, histidine 151, aspartate 153, aspartate 159, and glutamate 160 each coordinate Ca(2+). An N-linked (GlcNAc...) asparagine glycan is attached at asparagine 195. Residues 213–233 (VIAAAGVLSAILVSATILILL) form a helical membrane-spanning segment.

In terms of assembly, interacts (via LDL-receptor class A domains) with TCN2.

The protein localises to the cell membrane. Its function is as follows. Receptor for transcobalamin saturated with cobalamin (TCbl). Plays an important role in cobalamin uptake. Plasma membrane protein that is expressed on follicular dendritic cells (FDC) and mediates interaction with germinal center B cells. Functions as a costimulator to promote B cell responses to antigenic stimuli; promotes B cell differentiation and proliferation. Germinal center-B (GC-B) cells differentiate into memory B-cells and plasma cells (PC) through interaction with T-cells and follicular dendritic cells (FDC). CD320 augments the proliferation of PC precursors generated by IL-10. The sequence is that of CD320 antigen (Cd320) from Rattus norvegicus (Rat).